Reading from the N-terminus, the 205-residue chain is MTPPERLFLSRVRGTPLHLLLLGLLLVLLPGAQGLPGVGLTPSAAQTARQHPKMHLAHSTLKPAAHLIGDPSKQNSLLWRANTDRAFLQDGFSLSNNSLLVPTSGIYFVYSQVVFSGKAYSPKATPTPLYLAHEVQLFSSQYPFHVPLLSSQKMVYPGLQEPWLHSMYHGAAFQLTQGDQLSTHTDGIPHLVLSPSTVFFGAFAL.

A signal peptide spans 1–34; that stretch reads MTPPERLFLSRVRGTPLHLLLLGLLLVLLPGAQG. Threonine 41 is a glycosylation site (O-linked (GalNAc...) threonine). Residues 63–205 form the THD domain; the sequence is PAAHLIGDPS…STVFFGAFAL (143 aa). The N-linked (GlcNAc...) asparagine glycan is linked to asparagine 96.

It belongs to the tumor necrosis factor family. Homotrimer, and heterotrimer of either two LTB and one LTA subunits or (less prevalent) two LTA and one LTB subunits. Interacts with TNFRSF14.

It is found in the secreted. The protein resides in the membrane. Cytokine that in its homotrimeric form binds to TNFRSF1A/TNFR1, TNFRSF1B/TNFBR and TNFRSF14/HVEM. In its heterotrimeric form with LTB binds to TNFRSF3/LTBR. Lymphotoxin is produced by lymphocytes and is cytotoxic for a wide range of tumor cells in vitro and in vivo. This Macaca mulatta (Rhesus macaque) protein is Lymphotoxin-alpha (LTA).